Reading from the N-terminus, the 85-residue chain is Large ribosomal subunit protein bL27 (85 aa).

The tract at residues Met1–Leu21 is disordered.

Belongs to the bacterial ribosomal protein bL27 family.

In Hydrogenovibrio crunogenus (strain DSM 25203 / XCL-2) (Thiomicrospira crunogena), this protein is Large ribosomal subunit protein bL27.